The following is a 339-amino-acid chain: Serine/threonine-protein kinase pdik1l-A (339 aa).

In terms of domain architecture, Protein kinase spans 8–332; it reads YDLIREVGRG…LELKLIQIAF (325 aa). ATP contacts are provided by residues 14–22 and K37; that span reads VGRGSYGVV. The Proton acceptor role is filled by D164.

It belongs to the protein kinase superfamily. Ser/Thr protein kinase family.

The protein localises to the nucleus. It catalyses the reaction L-seryl-[protein] + ATP = O-phospho-L-seryl-[protein] + ADP + H(+). The catalysed reaction is L-threonyl-[protein] + ATP = O-phospho-L-threonyl-[protein] + ADP + H(+). This chain is Serine/threonine-protein kinase pdik1l-A (pdik1-a), found in Xenopus laevis (African clawed frog).